The sequence spans 321 residues: Probable proline iminopeptidase (321 aa).

The AB hydrolase-1 domain occupies K35 to M296. Residue S110 is the Nucleophile of the active site. D266 is an active-site residue. Residue H294 is the Proton donor of the active site.

This sequence belongs to the peptidase S33 family.

It is found in the cytoplasm. The enzyme catalyses Release of N-terminal proline from a peptide.. Specifically catalyzes the removal of N-terminal proline residues from peptides. In Leptolyngbya boryana (Plectonema boryanum), this protein is Probable proline iminopeptidase (pip).